The primary structure comprises 130 residues: Holo-[acyl-carrier-protein] synthase (130 aa).

Residues aspartate 9 and glutamate 58 each coordinate Mg(2+).

Belongs to the P-Pant transferase superfamily. AcpS family. Mg(2+) is required as a cofactor.

It localises to the cytoplasm. The enzyme catalyses apo-[ACP] + CoA = holo-[ACP] + adenosine 3',5'-bisphosphate + H(+). Transfers the 4'-phosphopantetheine moiety from coenzyme A to a Ser of acyl-carrier-protein. This Mycobacterium leprae (strain Br4923) protein is Holo-[acyl-carrier-protein] synthase.